A 315-amino-acid polypeptide reads, in one-letter code: MKNEDGKLKAMIFDIQSFSTHDGPGIRTNVFFKGCTLRCPWCANPESQKGNPQLLYTKMKCIGCMCCARACPYGAVSAITDPDEIKRVGYVHHDRSKCDKCTTHECLSACFQEALSIAGELMTVDDVMKKIDRDAVVYRNKGGVTVSGGDPLLHPDFLEELLCRCHEKAYNVALESELCVPTKNLERVMPYIDYYYTDCKIIDPVEHKRITGVSNDIILKNLRLIGERCPERMVLRTPIIPGFTDSDENIDGIASFAAECHFPTMNILPYHKLGVTKHERLGSTYQLPNVQPPSDAQMHHLADIIEAHGVKCIIN.

Positions 21-311 (HDGPGIRTNV…ADIIEAHGVK (291 aa)) constitute a Radical SAM core domain. The [4Fe-4S] cluster site is built by cysteine 35, cysteine 39, cysteine 42, cysteine 61, cysteine 64, cysteine 67, cysteine 71, cysteine 98, cysteine 101, cysteine 106, and cysteine 110. 2 consecutive 4Fe-4S ferredoxin-type domains span residues 52 to 81 (PQLLYTKMKCIGCMCCARACPYGAVSAITD) and 89 to 120 (GYVHHDRSKCDKCTTHECLSACFQEALSIAGE). S-adenosyl-L-methionine is bound by residues glycine 149, 198 to 200 (DCK), and histidine 271.

Belongs to the organic radical-activating enzymes family. The cofactor is [4Fe-4S] cluster.

It catalyses the reaction glycyl-[protein] + reduced [flavodoxin] + S-adenosyl-L-methionine = glycin-2-yl radical-[protein] + semiquinone [flavodoxin] + 5'-deoxyadenosine + L-methionine + H(+). Functionally, catalyzes activation of the indoleacetate decarboxylase OsIAD under anaerobic conditions by generation of an organic free radical on a glycine residue, via a homolytic cleavage of S-adenosyl-L-methionine (SAM). This Tractidigestivibacter scatoligenes (Olsenella scatoligenes) protein is Indoleacetate decarboxylase activating enzyme.